The sequence spans 79 residues: Major outer membrane lipoprotein Lpp 2 (79 aa).

A signal peptide spans 1–21; the sequence is MNRTNKLILGAVVLGSALLAG. Cys-22 carries the N-palmitoyl cysteine lipid modification. A lipid anchor (S-diacylglycerol cysteine) is attached at Cys-22. 2 repeats span residues 25 to 35 and 39 to 49; these read NAKIDQLSSDV and SAKVDQLSNDV. The stretch at 28-76 forms a coiled coil; sequence IDQLSSDVQTLSAKVDQLSNDVNAMRSDIQAAKDDAARANQRLDNKVSR. The tract at residues 60–79 is disordered; sequence KDDAARANQRLDNKVSRVRK. An N6-murein peptidoglycan lysine modification is found at Lys-79.

It belongs to the Lpp family. In terms of assembly, homotrimer.

The protein resides in the cell outer membrane. The protein localises to the secreted. It localises to the cell wall. In terms of biological role, a highly abundant outer membrane lipoprotein that controls the distance between the inner and outer membranes. The only protein known to be covalently linked to the peptidoglycan network (PGN). Also non-covalently binds the PGN. The link between the cell outer membrane and PGN contributes to maintenance of the structural and functional integrity of the cell envelope, and maintains the correct distance between the PGN and the outer membrane. The sequence is that of Major outer membrane lipoprotein Lpp 2 from Salmonella paratyphi A (strain ATCC 9150 / SARB42).